The following is a 365-amino-acid chain: AP2/ERF and B3 domain-containing protein Os01g0141000 (365 aa).

Residues 1-24 are disordered; sequence MGVVSFSSTSSGASTATTESGGAV. The segment at residues 68–123 is a DNA-binding region (AP2/ERF); the sequence is RYKGVVPQPNGRWGAQIYERHARVWLGTFPDEEAAARAYDVAALRYRGRDAATNFP. A DNA-binding region (TF-B3) is located at residues 182 to 294; that stretch reads FEKAVTPSDV…KLLFIDCKKN (113 aa).

The protein resides in the nucleus. The chain is AP2/ERF and B3 domain-containing protein Os01g0141000 from Oryza sativa subsp. japonica (Rice).